A 321-amino-acid polypeptide reads, in one-letter code: Cytochrome c biogenesis protein CcsA (321 aa).

The next 8 helical transmembrane spans lie at 1-21 (MIFITLEHILAHISFSLISVV), 36-56 (LSSSGGKGMIVTFVCTTGLLI), 70-90 (LYESFMFLSWSSSVIHIILEV), 97-117 (GLGAITAPSTMLTHGFATSGL), 143-163 (ILLSYATLLCGSLSSIAFLII), 229-249 (VIGLGFLLLTIGILSGAVWAN), 256-276 (WSWDPKETWALITWIIFAIYL), and 290-310 (AIIASLGSFIVWICYLGVDLL).

It belongs to the CcmF/CycK/Ccl1/NrfE/CcsA family. In terms of assembly, may interact with Ccs1.

It localises to the plastid. Its subcellular location is the chloroplast thylakoid membrane. Required during biogenesis of c-type cytochromes (cytochrome c6 and cytochrome f) at the step of heme attachment. The sequence is that of Cytochrome c biogenesis protein CcsA from Cycas taitungensis (Prince sago).